A 1021-amino-acid polypeptide reads, in one-letter code: Putative 115 kDa protein in type-1 retrotransposable element R1DM (1021 aa).

A Reverse transcriptase domain is found at 479–741; sequence RCIRLGYFPA…RSCRYLGITV (263 aa). Residues 955-971 form a gag-like cysteine motif region; the sequence is CACGDPYEDWMHILCAC.

The chain is Putative 115 kDa protein in type-1 retrotransposable element R1DM (R1A1-element\ORF2) from Drosophila melanogaster (Fruit fly).